The sequence spans 220 residues: Probable GTP-binding protein EngB (220 aa).

The 177-residue stretch at 23–199 (SVREVAFAGR…ERVLASWLDI (177 aa)) folds into the EngB-type G domain. Positions 38 and 60 each coordinate Mg(2+).

It belongs to the TRAFAC class TrmE-Era-EngA-EngB-Septin-like GTPase superfamily. EngB GTPase family. Requires Mg(2+) as cofactor.

Its function is as follows. Necessary for normal cell division and for the maintenance of normal septation. This Dechloromonas aromatica (strain RCB) protein is Probable GTP-binding protein EngB.